We begin with the raw amino-acid sequence, 154 residues long: Large ribosomal subunit protein uL13 (154 aa).

Belongs to the universal ribosomal protein uL13 family. Part of the 50S ribosomal subunit.

This protein is one of the early assembly proteins of the 50S ribosomal subunit, although it is not seen to bind rRNA by itself. It is important during the early stages of 50S assembly. The protein is Large ribosomal subunit protein uL13 of Mesorhizobium japonicum (strain LMG 29417 / CECT 9101 / MAFF 303099) (Mesorhizobium loti (strain MAFF 303099)).